The primary structure comprises 160 residues: Endoribonuclease YbeY (160 aa).

The Zn(2+) site is built by H112, H116, and H122. The disordered stretch occupies residues E141–K160.

The protein belongs to the endoribonuclease YbeY family. Zn(2+) serves as cofactor.

The protein localises to the cytoplasm. Functionally, single strand-specific metallo-endoribonuclease involved in late-stage 70S ribosome quality control and in maturation of the 3' terminus of the 16S rRNA. The sequence is that of Endoribonuclease YbeY from Pseudomonas aeruginosa (strain UCBPP-PA14).